The chain runs to 282 residues: Follicle cell protein 3C-1 (282 aa).

Residues 103-156 (EASTETIGNNGTTETTVGEAPIIGSSEGSTRSMEPTTASPLMSTNPSSSSSLVS) form a disordered region. The segment covering 106 to 118 (TETIGNNGTTETT) has biased composition (low complexity). Polar residues predominate over residues 128–140 (SEGSTRSMEPTTA). The span at 141–156 (SPLMSTNPSSSSSLVS) shows a compositional bias: low complexity.

In terms of tissue distribution, expressed in follicle cells during vitelline membrane formation.

The protein is Follicle cell protein 3C-1 (Fcp3C) of Drosophila melanogaster (Fruit fly).